The chain runs to 229 residues: LexA repressor (229 aa).

Positions 28–48 form a DNA-binding region, H-T-H motif; that stretch reads IREIGEALDIRSTNGVNDHLK. Residues Ser147 and Lys184 each act as for autocatalytic cleavage activity in the active site.

It belongs to the peptidase S24 family. As to quaternary structure, homodimer.

It carries out the reaction Hydrolysis of Ala-|-Gly bond in repressor LexA.. In terms of biological role, represses a number of genes involved in the response to DNA damage (SOS response), including recA and lexA. In the presence of single-stranded DNA, RecA interacts with LexA causing an autocatalytic cleavage which disrupts the DNA-binding part of LexA, leading to derepression of the SOS regulon and eventually DNA repair. The sequence is that of LexA repressor from Anaeromyxobacter dehalogenans (strain 2CP-C).